We begin with the raw amino-acid sequence, 320 residues long: Ubiquitin-like domain-containing CTD phosphatase 1 (320 aa).

Residues V6 to V77 enclose the Ubiquitin-like domain. The FCP1 homology domain maps to P136–I296. Mg(2+) contacts are provided by D146, D148, and D255.

The cofactor is Mg(2+).

The protein resides in the nucleus. It carries out the reaction O-phospho-L-seryl-[protein] + H2O = L-seryl-[protein] + phosphate. It catalyses the reaction O-phospho-L-threonyl-[protein] + H2O = L-threonyl-[protein] + phosphate. Functionally, dephosphorylates 26S nuclear proteasomes, thereby decreasing their proteolytic activity. Recruited to the 19S regulatory particle of the 26S proteasome where it dephosphorylates 19S component Rpt1 which impairs Rpt1 ATPase activity and disrupts 26S proteasome assembly. In Drosophila melanogaster (Fruit fly), this protein is Ubiquitin-like domain-containing CTD phosphatase 1.